The following is a 363-amino-acid chain: Phosphoserine aminotransferase (363 aa).

An L-glutamate-binding site is contributed by arginine 42. Pyridoxal 5'-phosphate contacts are provided by residues 76–77 (GR), tryptophan 102, threonine 156, aspartate 175, and glutamine 198. Position 199 is an N6-(pyridoxal phosphate)lysine (lysine 199). Position 240-241 (240-241 (NT)) interacts with pyridoxal 5'-phosphate.

It belongs to the class-V pyridoxal-phosphate-dependent aminotransferase family. SerC subfamily. In terms of assembly, homodimer. It depends on pyridoxal 5'-phosphate as a cofactor.

The protein localises to the cytoplasm. It catalyses the reaction O-phospho-L-serine + 2-oxoglutarate = 3-phosphooxypyruvate + L-glutamate. The enzyme catalyses 4-(phosphooxy)-L-threonine + 2-oxoglutarate = (R)-3-hydroxy-2-oxo-4-phosphooxybutanoate + L-glutamate. It functions in the pathway amino-acid biosynthesis; L-serine biosynthesis; L-serine from 3-phospho-D-glycerate: step 2/3. The protein operates within cofactor biosynthesis; pyridoxine 5'-phosphate biosynthesis; pyridoxine 5'-phosphate from D-erythrose 4-phosphate: step 3/5. Its function is as follows. Catalyzes the reversible conversion of 3-phosphohydroxypyruvate to phosphoserine and of 3-hydroxy-2-oxo-4-phosphonooxybutanoate to phosphohydroxythreonine. The chain is Phosphoserine aminotransferase from Shewanella sp. (strain W3-18-1).